Reading from the N-terminus, the 196-residue chain is Ribose 1,5-bisphosphate phosphokinase PhnN (196 aa).

Belongs to the ribose 1,5-bisphosphokinase family.

It catalyses the reaction alpha-D-ribose 1,5-bisphosphate + ATP = 5-phospho-alpha-D-ribose 1-diphosphate + ADP. The protein operates within metabolic intermediate biosynthesis; 5-phospho-alpha-D-ribose 1-diphosphate biosynthesis; 5-phospho-alpha-D-ribose 1-diphosphate from D-ribose 5-phosphate (route II): step 3/3. Functionally, catalyzes the phosphorylation of ribose 1,5-bisphosphate to 5-phospho-D-ribosyl alpha-1-diphosphate (PRPP). In Psychromonas ingrahamii (strain DSM 17664 / CCUG 51855 / 37), this protein is Ribose 1,5-bisphosphate phosphokinase PhnN.